A 132-amino-acid polypeptide reads, in one-letter code: Small ribosomal subunit protein uS8c (132 aa).

Belongs to the universal ribosomal protein uS8 family. As to quaternary structure, part of the 30S ribosomal subunit.

The protein localises to the plastid. It localises to the chloroplast. Functionally, one of the primary rRNA binding proteins, it binds directly to 16S rRNA central domain where it helps coordinate assembly of the platform of the 30S subunit. The protein is Small ribosomal subunit protein uS8c (rps8) of Huperzia lucidula (Shining clubmoss).